Reading from the N-terminus, the 345-residue chain is MENILDYNEAELKQWMDKNGEKTFRAKQFFDWIYNGTFDFKDMKNLPQSTRERLEKNFYIGMPSVVKRLNSKKGDTVKFLFRYNDGNIIECVVMKYDYGNSICISTQVGCRMGCSFCASTIGGRVRDLTSGEILAQILKAQKEIGERISNIVLMGSGEPLDNYDNVIKFIRIVNSEKGLNIGQRHITLSTCGIVPRIYDLMKENLQITLAISLHASDDETRKKIMPIANRYSISEIIDCCKKYSDFTGRRITFEYSLVKDVNDDKESAKKLGELLSGMLCHVNLIPVNTVNETSYEKPESSKIKKFCDTLLKYKIESTIRKEMGADINAACGQLRRNYIEESEGK.

Glu90 serves as the catalytic Proton acceptor. Residues 96-326 (YDYGNSICIS…STIRKEMGAD (231 aa)) enclose the Radical SAM core domain. Residues Cys103 and Cys331 are joined by a disulfide bond. Residues Cys110, Cys114, and Cys117 each contribute to the [4Fe-4S] cluster site. S-adenosyl-L-methionine-binding positions include 157-158 (GE), Ser189, 212-214 (SLH), and Asn288. Cys331 functions as the S-methylcysteine intermediate in the catalytic mechanism.

The protein belongs to the radical SAM superfamily. RlmN family. [4Fe-4S] cluster is required as a cofactor.

It localises to the cytoplasm. It carries out the reaction adenosine(2503) in 23S rRNA + 2 reduced [2Fe-2S]-[ferredoxin] + 2 S-adenosyl-L-methionine = 2-methyladenosine(2503) in 23S rRNA + 5'-deoxyadenosine + L-methionine + 2 oxidized [2Fe-2S]-[ferredoxin] + S-adenosyl-L-homocysteine. The catalysed reaction is adenosine(37) in tRNA + 2 reduced [2Fe-2S]-[ferredoxin] + 2 S-adenosyl-L-methionine = 2-methyladenosine(37) in tRNA + 5'-deoxyadenosine + L-methionine + 2 oxidized [2Fe-2S]-[ferredoxin] + S-adenosyl-L-homocysteine. Its function is as follows. Specifically methylates position 2 of adenine 2503 in 23S rRNA and position 2 of adenine 37 in tRNAs. The sequence is that of Probable dual-specificity RNA methyltransferase RlmN from Clostridium acetobutylicum (strain ATCC 824 / DSM 792 / JCM 1419 / IAM 19013 / LMG 5710 / NBRC 13948 / NRRL B-527 / VKM B-1787 / 2291 / W).